Reading from the N-terminus, the 603-residue chain is Leucine-rich repeat-containing protein 40 (603 aa).

Positions Met-1–Val-27 are disordered. LRR repeat units follow at residues Asp-83–Leu-104, Ala-106–Leu-127, Asn-129–Leu-150, His-152–Leu-173, Ser-175–Leu-196, Asn-198–Met-219, Ser-221–Met-242, Ser-244–Lys-265, Leu-266–Lys-286, Ser-290–Leu-311, Lys-313–Ser-335, Gln-336–Lys-357, Thr-401–Ala-422, Pro-427–Lys-449, Ser-451–His-473, Lys-474–Leu-495, Arg-497–Met-518, Ala-520–Lys-541, Gln-544–Cys-565, and Thr-567–Lys-588.

This Gallus gallus (Chicken) protein is Leucine-rich repeat-containing protein 40 (LRRC40).